A 423-amino-acid chain; its full sequence is Glucose-1-phosphate adenylyltransferase (423 aa).

Alpha-D-glucose 1-phosphate is bound by residues Tyr-107, Gly-172, 187–188 (EK), and Ser-205.

This sequence belongs to the bacterial/plant glucose-1-phosphate adenylyltransferase family. Homotetramer.

It carries out the reaction alpha-D-glucose 1-phosphate + ATP + H(+) = ADP-alpha-D-glucose + diphosphate. It participates in glycan biosynthesis; glycogen biosynthesis. In terms of biological role, involved in the biosynthesis of ADP-glucose, a building block required for the elongation reactions to produce glycogen. Catalyzes the reaction between ATP and alpha-D-glucose 1-phosphate (G1P) to produce pyrophosphate and ADP-Glc. This chain is Glucose-1-phosphate adenylyltransferase, found in Cereibacter sphaeroides (strain ATCC 17025 / ATH 2.4.3) (Rhodobacter sphaeroides).